A 596-amino-acid chain; its full sequence is Elongation factor 4 (596 aa).

In terms of domain architecture, tr-type G spans lysine 2–glutamate 184. GTP-binding positions include aspartate 14–threonine 19 and asparagine 131–aspartate 134.

This sequence belongs to the TRAFAC class translation factor GTPase superfamily. Classic translation factor GTPase family. LepA subfamily.

It localises to the cell inner membrane. The catalysed reaction is GTP + H2O = GDP + phosphate + H(+). In terms of biological role, required for accurate and efficient protein synthesis under certain stress conditions. May act as a fidelity factor of the translation reaction, by catalyzing a one-codon backward translocation of tRNAs on improperly translocated ribosomes. Back-translocation proceeds from a post-translocation (POST) complex to a pre-translocation (PRE) complex, thus giving elongation factor G a second chance to translocate the tRNAs correctly. Binds to ribosomes in a GTP-dependent manner. The chain is Elongation factor 4 from Shewanella sp. (strain ANA-3).